A 156-amino-acid polypeptide reads, in one-letter code: Ribosomal RNA large subunit methyltransferase H (156 aa).

Residues Leu73, Gly104, and 123–128 (LSALTL) contribute to the S-adenosyl-L-methionine site.

Belongs to the RNA methyltransferase RlmH family. As to quaternary structure, homodimer.

The protein resides in the cytoplasm. The catalysed reaction is pseudouridine(1915) in 23S rRNA + S-adenosyl-L-methionine = N(3)-methylpseudouridine(1915) in 23S rRNA + S-adenosyl-L-homocysteine + H(+). Its function is as follows. Specifically methylates the pseudouridine at position 1915 (m3Psi1915) in 23S rRNA. The chain is Ribosomal RNA large subunit methyltransferase H from Shewanella sediminis (strain HAW-EB3).